The following is a 308-amino-acid chain: Membrane protein insertase YidC 1 (308 aa).

The signal sequence occupies residues 1–22 (MKSIKRFALSAMGVAMLLVLTG). A lipid anchor (N-palmitoyl cysteine) is attached at Cys-23. The S-diacylglycerol cysteine moiety is linked to residue Cys-23. 5 helical membrane-spanning segments follow: residues 60 to 80 (FGVAIIIVTIIVRLIILPLGI), 135 to 155 (FGGVGCFPILLQMPFFSAIYF), 168 to 188 (YLGIPLGSPSMILVACAGVLY), 211 to 226 (MIYMSPLMIVVFSLFS), and 232 to 252 (LYWVVGGFMMILQQFIVNYIV). Positions 263-308 (ELAKNPPKASAFSKPSGRKDVTPEQPTAITSKKKHKNRNAGKQRSR) are disordered. Residues 293-308 (SKKKHKNRNAGKQRSR) are compositionally biased toward basic residues.

This sequence belongs to the OXA1/ALB3/YidC family. Type 2 subfamily.

The protein localises to the cell membrane. Functionally, required for the insertion and/or proper folding and/or complex formation of integral membrane proteins into the membrane. Involved in integration of membrane proteins that insert both dependently and independently of the Sec translocase complex, as well as at least some lipoproteins. The sequence is that of Membrane protein insertase YidC 1 from Streptococcus pneumoniae serotype 4 (strain ATCC BAA-334 / TIGR4).